The chain runs to 142 residues: Hemoglobin A subunit alpha-2 (142 aa).

One can recognise a Globin domain in the interval 2–142; it reads VLTAGDKANV…VAQNLTSKYR (141 aa). Position 59 (His59) interacts with O2. His88 lines the heme b pocket.

The protein belongs to the globin family. Tetramer of alpha-1, alpha-2 and two identical beta chains. Red blood cells.

Functionally, involved in oxygen transport from the lung to the various peripheral tissues. This chain is Hemoglobin A subunit alpha-2, found in Aldabrachelys gigantea (Aldabra giant tortoise).